A 166-amino-acid polypeptide reads, in one-letter code: Coiled-coil domain-containing protein 12 (166 aa).

The residue at position 1 (methionine 1) is an N-acetylmethionine. Residues 8 to 28 (VGRLEEEALRRKERLKALREK) adopt a coiled-coil conformation. A compositionally biased stretch (basic and acidic residues) spans 21 to 53 (RLKALREKTGRKDREDGEPQTKQLREEGEEVGK). A disordered region spans residues 21 to 55 (RLKALREKTGRKDREDGEPQTKQLREEGEEVGKHR). An N6-acetyllysine modification is found at lysine 53. Lysine 94 is covalently cross-linked (Glycyl lysine isopeptide (Lys-Gly) (interchain with G-Cter in SUMO2)). Positions 115–144 (DLKRDVAKKLEKLEKRTQRAIAELIRERLK) form a coiled coil. A disordered region spans residues 146–166 (QEDSLASAVDATTGQEACDSD). Residues serine 149 and serine 165 each carry the phosphoserine modification.

This chain is Coiled-coil domain-containing protein 12 (Ccdc12), found in Mus musculus (Mouse).